The chain runs to 156 residues: Ribosome maturation factor RimP (156 aa).

This sequence belongs to the RimP family.

The protein resides in the cytoplasm. Functionally, required for maturation of 30S ribosomal subunits. This chain is Ribosome maturation factor RimP, found in Gloeobacter violaceus (strain ATCC 29082 / PCC 7421).